A 181-amino-acid chain; its full sequence is Phospholipase A2 inhibitor gamma subunit B (181 aa).

Intrachain disulfides connect C3/C27, C6/C13, C20/C48, C54/C75, C76/C81, C101/C126, C119/C146, and C152/C172.

It belongs to the CNF-like-inhibitor family. Heterotrimer of 2 subunits A and 1 subunit B. Expressed by the liver.

The protein resides in the secreted. Functionally, strongly inhibits its own venom PLA2 and all other PLA2s tested including Elapid, Crotalid and Viperid venom PLA2s, as well as honeybee PLA2s. The sequence is that of Phospholipase A2 inhibitor gamma subunit B from Laticauda semifasciata (Black-banded sea krait).